Consider the following 304-residue polypeptide: MKCVDLFSGCGGLSLGFELAGFEICAAFENWEKAIEIYKNNFSHPIYNIDLRNEKEAVEKIKKYSPDLIMGGPPCQDFSSAGKRDISLGRADLTYSFANIVCNIRPKWFVMENVEQIKKSHILQDIINQFIDFGYGLTSAILDASYCGVPQSRTRFSLIGKLNSEHNFLIPTLSRKLSDKPMTVRDYLGNSLNLEFYYRHPRNYNRRGIFSIDEPSPTIRGVNRPIPKGYNINSCDPKGVELAKVRPLTTIERSYIQTFPKSFLFSGTKTDLEQMIGNAVPVNLAKFVASAIINFEKEPIRSMG.

Residues Met-1–Pro-299 enclose the SAM-dependent MTase C5-type domain. Residue Cys-75 is part of the active site.

Belongs to the class I-like SAM-binding methyltransferase superfamily. C5-methyltransferase family.

The enzyme catalyses a 2'-deoxycytidine in DNA + S-adenosyl-L-methionine = a 5-methyl-2'-deoxycytidine in DNA + S-adenosyl-L-homocysteine + H(+). In terms of biological role, a methylase, recognizes the double-stranded sequence 5'-GRCGYC-3', methylates C-? on both strands, and protects the DNA from cleavage by the HindV endonuclease. This chain is Type II methyltransferase M.HindV (hindVM), found in Haemophilus influenzae (strain ATCC 51907 / DSM 11121 / KW20 / Rd).